The chain runs to 351 residues: Photosystem II D2 protein (351 aa).

The chain crosses the membrane as a helical span at residues C39–T59. H116 lines the chlorophyll a pocket. Residues G123–P139 form a helical membrane-spanning segment. Pheophytin a is bound by residues Q128 and N141. The helical transmembrane segment at V151–S164 threads the bilayer. Residue H196 coordinates chlorophyll a. Residues G206 to E226 traverse the membrane as a helical segment. A plastoquinone contacts are provided by H213 and F260. H213 is a Fe cation binding site. Fe cation is bound at residue H267. A helical transmembrane segment spans residues G277 to R293.

Belongs to the reaction center PufL/M/PsbA/D family. PSII is composed of 1 copy each of membrane proteins PsbA, PsbB, PsbC, PsbD, PsbE, PsbF, PsbH, PsbI, PsbJ, PsbK, PsbL, PsbM, PsbT, PsbX, PsbY, PsbZ, Psb30/Ycf12, peripheral proteins PsbO, CyanoQ (PsbQ), PsbU, PsbV and a large number of cofactors. It forms dimeric complexes. The D1/D2 heterodimer binds P680, chlorophylls that are the primary electron donor of PSII, and subsequent electron acceptors. It shares a non-heme iron and each subunit binds pheophytin, quinone, additional chlorophylls, carotenoids and lipids. There is also a Cl(-1) ion associated with D1 and D2, which is required for oxygen evolution. The PSII complex binds additional chlorophylls, carotenoids and specific lipids. is required as a cofactor.

It localises to the cellular thylakoid membrane. It catalyses the reaction 2 a plastoquinone + 4 hnu + 2 H2O = 2 a plastoquinol + O2. Its function is as follows. Photosystem II (PSII) is a light-driven water:plastoquinone oxidoreductase that uses light energy to abstract electrons from H(2)O, generating O(2) and a proton gradient subsequently used for ATP formation. It consists of a core antenna complex that captures photons, and an electron transfer chain that converts photonic excitation into a charge separation. The D1/D2 (PsbA/PsbD) reaction center heterodimer binds P680, the primary electron donor of PSII as well as several subsequent electron acceptors. D2 is needed for assembly of a stable PSII complex. The chain is Photosystem II D2 protein from Crocosphaera subtropica (strain ATCC 51142 / BH68) (Cyanothece sp. (strain ATCC 51142)).